A 215-amino-acid chain; its full sequence is Calcium-binding protein 7 (215 aa).

Topologically, residues 1 to 188 are cytoplasmic; the sequence is MPFHPVTAAL…QIRQTCVRKS (188 aa). 2 consecutive EF-hand domains span residues 33–68 and 69–104; these read DELE…LGYM and PNEV…KLST. Asp-46, Asp-48, Asn-50, Glu-57, Asp-82, Asp-84, Asp-86, Gln-88, and Glu-93 together coordinate Ca(2+). A helical; Anchor for type IV membrane protein membrane pass occupies residues 189 to 209; sequence LICAFAIAFIISVMLIAANQV. At 210 to 215 the chain is on the extracellular side; it reads LRSGMK.

As to quaternary structure, interacts with PI4KB. This binding competes with FREQ/NCS1 binding in a calcium-dependent manner.

Its subcellular location is the golgi apparatus. The protein resides in the trans-Golgi network membrane. It localises to the cytoplasm. The protein localises to the perinuclear region. It is found in the cell membrane. Negatively regulates Golgi-to-plasma membrane trafficking by interacting with PI4KB and inhibiting its activity. The sequence is that of Calcium-binding protein 7 (CABP7) from Homo sapiens (Human).